A 222-amino-acid chain; its full sequence is Leucyl/phenylalanyl-tRNA--protein transferase (222 aa).

The protein belongs to the L/F-transferase family.

It is found in the cytoplasm. It carries out the reaction N-terminal L-lysyl-[protein] + L-leucyl-tRNA(Leu) = N-terminal L-leucyl-L-lysyl-[protein] + tRNA(Leu) + H(+). The catalysed reaction is N-terminal L-arginyl-[protein] + L-leucyl-tRNA(Leu) = N-terminal L-leucyl-L-arginyl-[protein] + tRNA(Leu) + H(+). The enzyme catalyses L-phenylalanyl-tRNA(Phe) + an N-terminal L-alpha-aminoacyl-[protein] = an N-terminal L-phenylalanyl-L-alpha-aminoacyl-[protein] + tRNA(Phe). Functions in the N-end rule pathway of protein degradation where it conjugates Leu, Phe and, less efficiently, Met from aminoacyl-tRNAs to the N-termini of proteins containing an N-terminal arginine or lysine. This Legionella pneumophila (strain Paris) protein is Leucyl/phenylalanyl-tRNA--protein transferase.